A 326-amino-acid chain; its full sequence is Virulence-associated V antigen (326 aa).

It is found in the secreted. Functionally, involved in calcium regulation of yop expression, which includes the export process. In Yersinia pseudotuberculosis serotype I (strain IP32953), this protein is Virulence-associated V antigen (lcrV).